The primary structure comprises 160 residues: MRHCIYPGTFDPVTYGHLDVLARAVKLFDHVTVAVAENTPKGPLFTSAQRIAMLQPNVTRFPNVSVTSFNSLLVEFAMAQKAIAVIRGLRAFSDFEFEFHMALMNRHLESQIETIFVMPNEQFSYTSSSLVKDVAKHGGDVSHFVPPNVAAALEAVFGTK.

Thr9 lines the substrate pocket. Residues 9–10 (TF) and His17 contribute to the ATP site. 3 residues coordinate substrate: Lys41, Leu73, and Arg87. Residues 88 to 90 (GLR), Glu98, and 123 to 129 (FSYTSSS) each bind ATP.

Belongs to the bacterial CoaD family. Homohexamer. Mg(2+) is required as a cofactor.

It is found in the cytoplasm. The catalysed reaction is (R)-4'-phosphopantetheine + ATP + H(+) = 3'-dephospho-CoA + diphosphate. It functions in the pathway cofactor biosynthesis; coenzyme A biosynthesis; CoA from (R)-pantothenate: step 4/5. Its function is as follows. Reversibly transfers an adenylyl group from ATP to 4'-phosphopantetheine, yielding dephospho-CoA (dPCoA) and pyrophosphate. The sequence is that of Phosphopantetheine adenylyltransferase from Opitutus terrae (strain DSM 11246 / JCM 15787 / PB90-1).